We begin with the raw amino-acid sequence, 933 residues long: Isoleucine--tRNA ligase (933 aa).

A 'HIGH' region motif is present at residues 57-67 (PYANGNIHMGH). Residue Glu-556 coordinates L-isoleucyl-5'-AMP. The 'KMSKS' region signature appears at 597-601 (KMSKS). Lys-600 contacts ATP. Residues Cys-891, Cys-894, Cys-911, and Cys-914 each contribute to the Zn(2+) site.

Belongs to the class-I aminoacyl-tRNA synthetase family. IleS type 1 subfamily. As to quaternary structure, monomer. It depends on Zn(2+) as a cofactor.

It is found in the cytoplasm. It catalyses the reaction tRNA(Ile) + L-isoleucine + ATP = L-isoleucyl-tRNA(Ile) + AMP + diphosphate. Catalyzes the attachment of isoleucine to tRNA(Ile). As IleRS can inadvertently accommodate and process structurally similar amino acids such as valine, to avoid such errors it has two additional distinct tRNA(Ile)-dependent editing activities. One activity is designated as 'pretransfer' editing and involves the hydrolysis of activated Val-AMP. The other activity is designated 'posttransfer' editing and involves deacylation of mischarged Val-tRNA(Ile). This Pediococcus pentosaceus (strain ATCC 25745 / CCUG 21536 / LMG 10740 / 183-1w) protein is Isoleucine--tRNA ligase.